The primary structure comprises 1076 residues: GPI inositol-deacylase A (1076 aa).

A helical transmembrane segment spans residues 3-23 (IATFPALAITALALVLWATVA). N-linked (GlcNAc...) asparagine glycosylation is found at N48 and N119. The active site involves S240. N-linked (GlcNAc...) asparagine glycosylation is present at N404. Helical transmembrane passes span 765–785 (FLGFYRVMFAIFPMFVFLCLL) and 815–835 (WILAGSCAIPFVPHVLVSLLY). N849 carries an N-linked (GlcNAc...) asparagine glycan. Helical transmembrane passes span 855–875 (FLGPVSLVIATGIVVVLHWLL), 877–897 (ILTLWVCQCYYMLGLAPIAPE), and 910–930 (FLLLLVFKIVPHQFAFMVAVL). Residues N952 and N966 are each glycosylated (N-linked (GlcNAc...) asparagine). 3 helical membrane-spanning segments follow: residues 970–990 (SLLLLLVLLLPINAPTLVVWL), 1006–1026 (EVSAILPILLLVLTASRGIMI), and 1035–1055 (IYATFAFLAYFALFVLFHGVV).

Belongs to the GPI inositol-deacylase family.

The protein resides in the endoplasmic reticulum membrane. Its function is as follows. Involved in inositol deacylation of GPI-anchored proteins which plays important roles in the quality control and ER-associated degradation of GPI-anchored proteins. This is GPI inositol-deacylase A (BST1A) from Yarrowia lipolytica (strain CLIB 122 / E 150) (Yeast).